We begin with the raw amino-acid sequence, 571 residues long: La-related protein 7 (571 aa).

Residue Met1 is modified to N-acetylmethionine. Positions 1 to 17 (METENQKTMEESTEKRK) are enriched in basic and acidic residues. 2 disordered regions span residues 1–25 (METENQKTMEESTEKRKEEKKKRSR) and 181–366 (LNNP…ERHK). In terms of domain architecture, HTH La-type RNA-binding spans 23–117 (RSRVKQVLAD…KPLGERPKDE (95 aa)). The RRM domain occupies 120–198 (RTVYVELLPK…PRKPGIFPKT (79 aa)). A compositionally biased stretch (basic residues) spans 214–223 (KKKKKKKGRI). Residue Lys232 forms a Glycyl lysine isopeptide (Lys-Gly) (interchain with G-Cter in SUMO2) linkage. The residue at position 252 (Thr252) is a Phosphothreonine. Residues Ser254 and Ser257 each carry the phosphoserine modification. Thr261 bears the Phosphothreonine mark. A compositionally biased stretch (basic and acidic residues) spans 287–296 (KAGKRERSSA). 3 positions are modified to phosphoserine: Ser294, Ser295, and Ser335. A Phosphothreonine modification is found at Thr336. Over residues 342–351 (PGDRKGDSLS) the composition is skewed to basic and acidic residues. At Ser349 the chain carries Phosphoserine. The span at 352–365 (KGKRKHKKKHKERH) shows a compositional bias: basic residues. Lys408 participates in a covalent cross-link: Glycyl lysine isopeptide (Lys-Gly) (interchain with G-Cter in SUMO2). A disordered region spans residues 411-432 (SEMETESKAPPGSGQQCSTQEK). Polar residues predominate over residues 423–432 (SGQQCSTQEK). Positions 439-552 (QFVTGVIVKI…TEKLITKAEK (114 aa)) constitute a xRRM domain.

It belongs to the LARP7 family. As to quaternary structure, core component of the 7SK RNP complex, at least composed of 7SK RNA, LARP7, MEPCE, HEXIM1 (or HEXIM2) and P-TEFb (composed of CDK9 and CCNT1/cyclin-T1). Interacts with METTL16. Interacts with RBM7; upon genotoxic stress this interaction is enhanced, triggering the release of inactive P-TEFb complex from the core, yielding to P-TEFb complex activation. Associates with box C/D small nucleolar ribonucleoprotein (snoRNP) complexes.

The protein localises to the nucleus. It localises to the nucleoplasm. In terms of biological role, RNA-binding protein that specifically binds distinct small nuclear RNA (snRNAs) and regulates their processing and function. Specifically binds the 7SK snRNA (7SK RNA) and acts as a core component of the 7SK ribonucleoprotein (RNP) complex, thereby acting as a negative regulator of transcription elongation by RNA polymerase II. The 7SK RNP complex sequesters the positive transcription elongation factor b (P-TEFb) in a large inactive 7SK RNP complex preventing RNA polymerase II phosphorylation and subsequent transcriptional elongation. The 7SK RNP complex also promotes snRNA gene transcription by RNA polymerase II via interaction with the little elongation complex (LEC). LARP7 specifically binds to the highly conserved 3'-terminal U-rich stretch of 7SK RNA; on stimulation, remains associated with 7SK RNA, whereas P-TEFb is released from the complex. LARP7 also acts as a regulator of mRNA splicing fidelity by promoting U6 snRNA processing. Specifically binds U6 snRNAs and associates with a subset of box C/D RNP complexes: promotes U6 snRNA 2'-O-methylation by facilitating U6 snRNA loading into box C/D RNP complexes. U6 snRNA 2'-O-methylation is required for mRNA splicing fidelity. Binds U6 snRNAs with a 5'-CAGGG-3' sequence motif. U6 snRNA processing is required for spermatogenesis. The protein is La-related protein 7 of Rattus norvegicus (Rat).